Here is a 255-residue protein sequence, read N- to C-terminus: Taurine import ATP-binding protein TauB (255 aa).

Residues 2 to 229 (LQISHLYADY…RFVAGESSRS (228 aa)) enclose the ABC transporter domain. 34-41 (GPSGCGKT) serves as a coordination point for ATP.

It belongs to the ABC transporter superfamily. Taurine importer (TC 3.A.1.17.1) family. The complex is composed of two ATP-binding proteins (TauB), two transmembrane proteins (TauC) and a solute-binding protein (TauA).

It is found in the cell inner membrane. It catalyses the reaction taurine(out) + ATP + H2O = taurine(in) + ADP + phosphate + H(+). Functionally, part of the ABC transporter complex TauABC involved in taurine import. Responsible for energy coupling to the transport system. The chain is Taurine import ATP-binding protein TauB from Escherichia coli O157:H7.